The chain runs to 468 residues: 3-isopropylmalate dehydratase large subunit (468 aa).

3 residues coordinate [4Fe-4S] cluster: cysteine 346, cysteine 406, and cysteine 409.

Belongs to the aconitase/IPM isomerase family. LeuC type 1 subfamily. As to quaternary structure, heterodimer of LeuC and LeuD. The cofactor is [4Fe-4S] cluster.

It carries out the reaction (2R,3S)-3-isopropylmalate = (2S)-2-isopropylmalate. It participates in amino-acid biosynthesis; L-leucine biosynthesis; L-leucine from 3-methyl-2-oxobutanoate: step 2/4. Catalyzes the isomerization between 2-isopropylmalate and 3-isopropylmalate, via the formation of 2-isopropylmaleate. This chain is 3-isopropylmalate dehydratase large subunit, found in Cyanothece sp. (strain PCC 7425 / ATCC 29141).